The primary structure comprises 171 residues: Ribulose bisphosphate carboxylase small subunit, chloroplastic (171 aa).

The transit peptide at 1–50 (MATGAGAGAATVVSAFTGLKSTAQFPSSFKMSNAAAEWEQKTTSNGGRVR) directs the protein to the chloroplast.

Belongs to the RuBisCO small chain family. As to quaternary structure, heterohexadecamer of 8 large and 8 small subunits.

It is found in the plastid. Its subcellular location is the chloroplast. Its function is as follows. RuBisCO catalyzes two reactions: the carboxylation of D-ribulose 1,5-bisphosphate, the primary event in carbon dioxide fixation, as well as the oxidative fragmentation of the pentose substrate. Both reactions occur simultaneously and in competition at the same active site. Although the small subunit is not catalytic it is essential for maximal activity. The chain is Ribulose bisphosphate carboxylase small subunit, chloroplastic from Pinus thunbergii (Japanese black pine).